The primary structure comprises 306 residues: Protoheme IX farnesyltransferase (306 aa).

The next 8 helical transmembrane spans lie at 31–50 (VIEL…QGGW), 55–77 (LILG…NCYI), 104–124 (LVFA…ISNW), 125–145 (LAAA…TLWL), 168–188 (WAAV…IVFL), 218–235 (GRAA…ATLA), 238–258 (LLLI…LAGG), and 286–306 (ASIS…LLPF).

The protein belongs to the UbiA prenyltransferase family. Protoheme IX farnesyltransferase subfamily.

It localises to the cell membrane. The enzyme catalyses heme b + (2E,6E)-farnesyl diphosphate + H2O = Fe(II)-heme o + diphosphate. Its pathway is porphyrin-containing compound metabolism; heme O biosynthesis; heme O from protoheme: step 1/1. Its function is as follows. Converts heme B (protoheme IX) to heme O by substitution of the vinyl group on carbon 2 of heme B porphyrin ring with a hydroxyethyl farnesyl side group. This Clavibacter michiganensis subsp. michiganensis (strain NCPPB 382) protein is Protoheme IX farnesyltransferase.